The chain runs to 302 residues: GATA transcription factor 28 (302 aa).

Residues 47 to 66 (NAGGMSEGVETDIPSHPGNV) are disordered. The Tify domain occupies 77 to 112 (GSEQGDQLTLSFQGQVYVFDSVLPEKVQAVLLLLGG). The interval 119–141 (APPGLGSPHQNNRVSSLPGTPQR) is disordered. The segment covering 126–141 (PHQNNRVSSLPGTPQR) has biased composition (polar residues). Positions 147-189 (RLASLVRFREKRKGRNFDKKIRYTVRKEVALRMQRNKGQFTSA) constitute a CCT domain. The segment at 217–273 (QHQEISCRHCGIGEKSTPMMRRGPAGPRTLCNACGLMWANKGAFRDLSKASPQTAQN) adopts a GATA-type zinc-finger fold.

This sequence belongs to the type IV zinc-finger family. Class C subfamily. In terms of tissue distribution, predominantly expressed in shoot apices, inflorescences and roots.

The protein localises to the nucleus. Its function is as follows. Transcriptional activator that specifically binds 5'-GATA-3' or 5'-GAT-3' motifs within gene promoters. The polypeptide is GATA transcription factor 28 (GATA28) (Arabidopsis thaliana (Mouse-ear cress)).